The chain runs to 917 residues: Probable dipeptidyl-aminopeptidase B (917 aa).

Positions 1–78 are disordered; the sequence is MGVEKRINDE…EGDLEEGFVP (78 aa). Over 1–90 the chain is Cytoplasmic; it reads MGVEKRINDE…GGWSAPRKVS (90 aa). Over residues 16–26 the composition is skewed to basic and acidic residues; the sequence is AERDDKSRDSI. Residues 27–49 show a composition bias toward low complexity; the sequence is DSTSTASISLALLGGANGSAHGS. The span at 55–65 shows a compositional bias: basic and acidic residues; that stretch reads RKSENQEKYHD. The chain crosses the membrane as a helical; Signal-anchor for type II membrane protein span at residues 91 to 111; sequence VIFTLIVTLCIAGWLVAFFVL. Over 112–917 the chain is Vacuolar; sequence LGRHKDSSKD…LGLINILRNG (806 aa). N-linked (GlcNAc...) asparagine glycans are attached at residues Asn-350 and Asn-465. The active-site Charge relay system is the Ser-754. N-linked (GlcNAc...) asparagine glycosylation is present at Asn-813. Residues Asp-831 and His-864 each act as charge relay system in the active site.

Belongs to the peptidase S9B family.

It localises to the vacuole membrane. It catalyses the reaction Release of an N-terminal dipeptide, Xaa-Yaa-|-Zaa-, from a polypeptide, preferentially when Yaa is Pro, provided Zaa is neither Pro nor hydroxyproline.. Functionally, type IV dipeptidyl-peptidase which removes N-terminal dipeptides sequentially from polypeptides having unsubstituted N-termini provided that the penultimate residue is proline. This is Probable dipeptidyl-aminopeptidase B (DAPB) from Coccidioides posadasii (strain C735) (Valley fever fungus).